Consider the following 962-residue polypeptide: Glycine dehydrogenase (decarboxylating) (962 aa).

Lysine 709 is modified (N6-(pyridoxal phosphate)lysine).

Belongs to the GcvP family. In terms of assembly, the glycine cleavage system is composed of four proteins: P, T, L and H. The cofactor is pyridoxal 5'-phosphate.

It carries out the reaction N(6)-[(R)-lipoyl]-L-lysyl-[glycine-cleavage complex H protein] + glycine + H(+) = N(6)-[(R)-S(8)-aminomethyldihydrolipoyl]-L-lysyl-[glycine-cleavage complex H protein] + CO2. In terms of biological role, the glycine cleavage system catalyzes the degradation of glycine. The P protein binds the alpha-amino group of glycine through its pyridoxal phosphate cofactor; CO(2) is released and the remaining methylamine moiety is then transferred to the lipoamide cofactor of the H protein. This is Glycine dehydrogenase (decarboxylating) from Shewanella sp. (strain ANA-3).